Reading from the N-terminus, the 65-residue chain is Large ribosomal subunit protein bL35 (65 aa).

Residues 1–21 are disordered; it reads MPKMKTKSGAAKRFTVRAGGT.

The protein belongs to the bacterial ribosomal protein bL35 family.

The protein is Large ribosomal subunit protein bL35 of Nitrosospira multiformis (strain ATCC 25196 / NCIMB 11849 / C 71).